A 275-amino-acid polypeptide reads, in one-letter code: Probable CCR4-associated factor 1 homolog 7 (275 aa).

The a divalent metal cation site is built by D40, E42, D167, and D236.

It belongs to the CAF1 family. Component of the CCR4-NOT complex, at least composed of CRR4 and CAF1 proteins. The cofactor is a divalent metal cation.

It localises to the nucleus. The protein resides in the cytoplasm. It catalyses the reaction Exonucleolytic cleavage of poly(A) to 5'-AMP.. In terms of biological role, ubiquitous transcription factor required for a diverse set of processes. It is a component of the CCR4 complex involved in the control of gene expression. This chain is Probable CCR4-associated factor 1 homolog 7 (CAF1-7), found in Arabidopsis thaliana (Mouse-ear cress).